Reading from the N-terminus, the 506-residue chain is Histidine--tRNA ligase, mitochondrial (506 aa).

A mitochondrion-targeting transit peptide spans 1 to 33 (MPLLGLLPRRAWASLLSQLLRPPCASCTGAVRC). Position 67 is a phosphoserine (Ser67). L-histidine contacts are provided by residues 131-133 (DLT), Arg158, Gln174, Asp178, Arg327, and 331-332 (YY). Lys444 is modified (N6-acetyllysine).

The protein belongs to the class-II aminoacyl-tRNA synthetase family. As to quaternary structure, homodimer. A high level expression is seen in the heart, kidney and skeletal muscle while a lower level expression is seen in the brain and liver.

It is found in the mitochondrion. The catalysed reaction is tRNA(His) + L-histidine + ATP = L-histidyl-tRNA(His) + AMP + diphosphate + H(+). Its function is as follows. Mitochondrial aminoacyl-tRNA synthetase that catalyzes the ATP-dependent ligation of histidine to the 3'-end of its cognate tRNA, via the formation of an aminoacyl-adenylate intermediate (His-AMP). In Homo sapiens (Human), this protein is Histidine--tRNA ligase, mitochondrial (HARS2).